Consider the following 57-residue polypeptide: MLFKSLQSISSVSSVQKNQISSISVGSTQSNNNAALLDAAALVVIPGLLTAAAVAHI.

A helical transmembrane segment spans residues 34-54 (AALLDAAALVVIPGLLTAAAV).

It is found in the membrane. This is an uncharacterized protein from Dictyostelium discoideum (Social amoeba).